We begin with the raw amino-acid sequence, 348 residues long: Isopentenyl-diphosphate delta-isomerase (348 aa).

5–6 lines the substrate pocket; that stretch reads RK. FMN is bound by residues serine 61, 62–64, serine 92, and asparagine 120; that span reads SMT. 92 to 94 contributes to the substrate binding site; that stretch reads SMR. Glutamine 159 provides a ligand contact to substrate. Residue glutamate 160 coordinates Mg(2+). FMN is bound by residues lysine 189, serine 214, threonine 219, 269-271, and 290-291; these read GLR and AR.

This sequence belongs to the IPP isomerase type 2 family. In terms of assembly, homooctamer. Dimer of tetramers. The cofactor is FMN. NADPH is required as a cofactor. It depends on Mg(2+) as a cofactor.

It localises to the cytoplasm. It carries out the reaction isopentenyl diphosphate = dimethylallyl diphosphate. In terms of biological role, involved in the biosynthesis of isoprenoids. Catalyzes the 1,3-allylic rearrangement of the homoallylic substrate isopentenyl (IPP) to its allylic isomer, dimethylallyl diphosphate (DMAPP). The protein is Isopentenyl-diphosphate delta-isomerase of Thermoplasma acidophilum (strain ATCC 25905 / DSM 1728 / JCM 9062 / NBRC 15155 / AMRC-C165).